A 171-amino-acid polypeptide reads, in one-letter code: Phosphopantetheine adenylyltransferase (171 aa).

Residue T9 coordinates substrate. Residues 9 to 10 (TF) and H17 each bind ATP. Positions 41, 73, and 87 each coordinate substrate. Residues 88 to 90 (GLR), E98, and 123 to 129 (YQFISGT) each bind ATP.

It belongs to the bacterial CoaD family. Homohexamer. The cofactor is Mg(2+).

The protein resides in the cytoplasm. The catalysed reaction is (R)-4'-phosphopantetheine + ATP + H(+) = 3'-dephospho-CoA + diphosphate. It participates in cofactor biosynthesis; coenzyme A biosynthesis; CoA from (R)-pantothenate: step 4/5. Functionally, reversibly transfers an adenylyl group from ATP to 4'-phosphopantetheine, yielding dephospho-CoA (dPCoA) and pyrophosphate. The polypeptide is Phosphopantetheine adenylyltransferase (Paraburkholderia xenovorans (strain LB400)).